The primary structure comprises 402 residues: Thyroid hormone receptor alpha (402 aa).

The segment at 1–22 is disordered; the sequence is MEQKPSTLDPLSEPEDTRWLDG. The modulating stretch occupies residues 1 to 50; it reads MEQKPSTLDPLSEPEDTRWLDGKRKRKSSQCLVKSSMSGYIPSYLDKDEQ. The residue at position 12 (S12) is a Phosphoserine; by CK2. S28 carries the post-translational modification Phosphoserine. 8 residues coordinate Zn(2+): C51, C54, C68, C71, C89, C95, C105, and C108. 2 consecutive NR C4-type zinc fingers follow at residues 51 to 71 and 89 to 113; these read CVVC…CAGC and CKYD…FKKC. A DNA-binding region (nuclear receptor) is located at residues 51–125; that stretch reads CVVCGDKATG…VGMAMDLVLY (75 aa). The 242-residue stretch at 161-402 folds into the NR LBD domain; that stretch reads EEWELIHVVT…ELFPPLFLEV (242 aa). 3,3',5-triiodo-L-thyronine-binding residues include R226 and S275.

Belongs to the nuclear hormone receptor family. NR1 subfamily. Probably interacts with SFPQ.

Its subcellular location is the nucleus. Its function is as follows. Nuclear hormone receptor that can act as a repressor or activator of transcription. High affinity receptor for thyroid hormones, including triiodothyronine and thyroxine. This Pygoscelis adeliae (Adelie penguin) protein is Thyroid hormone receptor alpha (THRA).